A 440-amino-acid polypeptide reads, in one-letter code: MQAYFDQLDRVRYEGPQSTNPLAFRHYNPDELVLGKRMEDHLRFAACYWHTFCWNGADMFGVGAFNRPWQQPGEALELAKRKADVAFEFLHKLNVPFYCFHDVDVSPEGASLKEYKNNFAQMVDVLAAKQEQSGVKLLWGTANCFTNPRYGAGAATNPDPEVFSWAATQVVTAMNATHKLGGENYVLWGGREGYETLLNTDLRQEREQIGRFMQMVVEHKHKMGFQGTLLIEPKPQEPTKHQYDYDVATVYGFLKQFGLEKEIKVNIEANHATLAGHSFHHEIATAIALGIFGSVDANRGDAQLGWDTDQFPISVEENALVMYEILKAGGFTTGGLNFDAKVRRQSTDKYDLFYGHIGAMDTMALSLKIAARMVEDGELDKRVAKRYAGWNGELGQQILKGQLSLGELAQYAEQHNLAPVHQSGHQELLENLVNRYLFDK.

Catalysis depends on residues His-101 and Asp-104. Mg(2+) is bound by residues Glu-232, Glu-268, His-271, Asp-296, Asp-307, Asp-309, and Asp-339.

It belongs to the xylose isomerase family. Homotetramer. Mg(2+) is required as a cofactor.

Its subcellular location is the cytoplasm. It carries out the reaction alpha-D-xylose = alpha-D-xylulofuranose. The polypeptide is Xylose isomerase (Salmonella paratyphi B (strain ATCC BAA-1250 / SPB7)).